The sequence spans 962 residues: Villin-5 (962 aa).

Gelsolin-like repeat units lie at residues 29-79, 150-190, 262-305, 396-453, 534-574, and 636-677; these read FKPV…DEAG, VRVK…QERA, GQTD…DQRK, LQVW…EDRA, MQAI…EDQE, and LKAT…KKKP. Residues 749–785 are disordered; that stretch reads KPKRRVPAYSSRSTVPDKSQPRSRSMTFSPDRARVRG. Polar residues predominate over residues 758 to 776; it reads SSRSTVPDKSQPRSRSMTF. 2 positions are modified to phosphoserine: serine 777 and serine 787. Residues 845–862 are compositionally biased toward low complexity; it reads EKPTPTSQEPPTSPSSSE. A disordered region spans residues 845-917; sequence EKPTPTSQEP…LKTDSEDPVS (73 aa). Residues 863–875 are compositionally biased toward polar residues; the sequence is ATNQAEAPKSTSE. Serine 883 carries the phosphoserine modification. Over residues 889–898 the composition is skewed to acidic residues; that stretch reads SKEEEAEEES. The 66-residue stretch at 897-962 folds into the HP domain; it reads ESSLPTFPYE…NKLKMSVNLF (66 aa).

Belongs to the villin/gelsolin family. In terms of tissue distribution, ubiquitous, but expressed preferentially in pollen and stamens.

Its subcellular location is the cytoplasm. The protein localises to the cytoskeleton. In terms of biological role, major actin filament stabilizing factor and regulator of actin dynamics. Binds actin and actin filament bundles in a Ca(2+)-insensitive manner, but caps the barbed end of actin filaments and is able to sever them in a calcium-dependent manner. Required for the construction of actin collars in pollen tubes. Acts synergistically with VLN2 (AC O81644) to regulate polarized pollen tube growth. The protein is Villin-5 of Arabidopsis thaliana (Mouse-ear cress).